A 1274-amino-acid chain; its full sequence is MALQQVRPTNKQCRKNKKRAKAKMMESPRRLCRWAIISYEGSPRIACNATDETAESPFLRNRERSSCINRGFDISYCVRCAFTPDEHCVWEPCCAIQSVRQQVEVGTSKRTMDIYSPLQFCFRVTGLRVSAVIRLEYVQALFSQPISKVDQVSVGTVTNTITTLSNTIQQSISDKLAILFQSLALLLAAFIIAFKYSWALTLVTSSALLFVVVGCSVTLPFMTKIQQKIDKADEKHSSIAAEVFGSIRTVISLGAQESLSKRYTTWVEEARKRGNGLSLIFGIHFALVFFALYASFSLAFWFGLKLYREGHIGEINTVITVFFSVMIVVSVLGNIASPLIIVSKAASAAGSFFELIDSEKVDSGGLREPDASAHVDIIFRDVRFTYPTRPDVPVLKGLDIRFQNGKTTALVGPSGSGKSTIVALIERWYQLAMSPEDQNQGSIYVGPHDINSLDLKWWRSQIGLVQQEPFLFNDTIFNNVAFGLIGTQWEKEPDSVKKELIEKACREAFAEEFIQRLPEGYATIVGQNGIKLSGGQRQRLAIARSIVKEPKILILDEATSAIDVRGEKIVQAALDRVSRNRTTIMIAHRLSTIRRADHIVVMKGGVNVEEGTHEELLQREGGVYRDLVNAQRLELLAEEDSHTGNAVLELQDEAQSPTMSVQEKLQDEDNTQDKNRGFIRTIGLVLYEQRARWPLYVAVLISTAGAGTAFPLQSWLFAKLIEVFRFTGQKLVDAANFWALMFFLLALAVGVLYSTVGFTANSLSVRISEACRKEYFQNILAKPIPFHDLSENASGSIVSRLATDPKQVQELIGLNGAFPLISTFSMIGCIAIAFSFGWKLSLVTVFAALPCTFLAAFMRIRYELQFEAMNAAVYAGSSQFAAEAIDAFRTVSSLTMEDAILDRYTQLLREQQKKAFRKARYATLIFAFSDSVELCAMALTFWYGGQLLASREYQPTSFFVIFMAIIQGGQSAGQFFSFASNFAQAAASANRILNSRPQSDELGAASIEKQQLVRSGDLTGATVEFHDVSFRYASQDVPLFTGLNVSIQSGQFVAFVGPSGCGKTTVISLLERFYSPSQGTITFNGEDIRTLEMTSYRRELSLVAQEPRLFEGSIRENITLGLDQSEFTEEELIQACKDAEIHDFITSLPEGYATELGIKAQTSLSGGQRQRLCIARALLRKPSLLLLDEATSSLDSQSEKVVQGAMERLAQKRSLTIVAVAHRLATIQKADTIYVFGTAHAGQASRIVEQGTHQELLRAKGTYWQMVSSPRFLT.

The N-linked (GlcNAc...) asparagine glycan is linked to Asn48. Residues Phe120–Lys344 form the ABC transmembrane type-1 1 domain. The next 4 membrane-spanning stretches (helical) occupy residues Leu183–Val203, Ser205–Ile225, Ile280–Phe300, and Val321–Ile341. The region spanning Ile377–Asn629 is the ABC transporter 1 domain. Gly412 to Ser419 provides a ligand contact to ATP. Residues Asn473 and Asn580 are each glycosylated (N-linked (GlcNAc...) asparagine). Helical transmembrane passes span Val697 to Phe717 and Phe737 to Gly757. Residues Val697–Gln984 form the ABC transmembrane type-1 2 domain. Asn792 is a glycosylation site (N-linked (GlcNAc...) asparagine). 3 helical membrane-spanning segments follow: residues Phe818–Trp838, Leu840–Ile860, and Leu924–Gly944. An ABC transporter 2 domain is found at Val1023–Ser1269. An N-linked (GlcNAc...) asparagine glycan is attached at Asn1044. Gly1057 to Thr1064 is an ATP binding site. Asn1117 is a glycosylation site (N-linked (GlcNAc...) asparagine).

Belongs to the ABC transporter superfamily. ABCB family. Multidrug resistance exporter (TC 3.A.1.201) subfamily.

The protein resides in the cell membrane. Pleiotropic ABC efflux transporter that may be involved in A.fumigatus adaptation to azoles such as vorizonazole. The polypeptide is ABC multidrug transporter E (Aspergillus fumigatus (strain ATCC MYA-4609 / CBS 101355 / FGSC A1100 / Af293) (Neosartorya fumigata)).